The chain runs to 436 residues: Serine hydroxymethyltransferase (436 aa).

(6S)-5,6,7,8-tetrahydrofolate is bound by residues L120 and 124–126; that span reads GHL. Position 229 is an N6-(pyridoxal phosphate)lysine (K229).

This sequence belongs to the SHMT family. As to quaternary structure, homodimer. Pyridoxal 5'-phosphate serves as cofactor.

Its subcellular location is the cytoplasm. It catalyses the reaction (6R)-5,10-methylene-5,6,7,8-tetrahydrofolate + glycine + H2O = (6S)-5,6,7,8-tetrahydrofolate + L-serine. Its pathway is one-carbon metabolism; tetrahydrofolate interconversion. It functions in the pathway amino-acid biosynthesis; glycine biosynthesis; glycine from L-serine: step 1/1. Its function is as follows. Catalyzes the reversible interconversion of serine and glycine with tetrahydrofolate (THF) serving as the one-carbon carrier. This reaction serves as the major source of one-carbon groups required for the biosynthesis of purines, thymidylate, methionine, and other important biomolecules. Also exhibits THF-independent aldolase activity toward beta-hydroxyamino acids, producing glycine and aldehydes, via a retro-aldol mechanism. The chain is Serine hydroxymethyltransferase from Roseiflexus castenholzii (strain DSM 13941 / HLO8).